The sequence spans 889 residues: Alanine--tRNA ligase (889 aa).

The Zn(2+) site is built by H569, H573, C671, and H675.

Belongs to the class-II aminoacyl-tRNA synthetase family. The cofactor is Zn(2+).

It is found in the cytoplasm. The catalysed reaction is tRNA(Ala) + L-alanine + ATP = L-alanyl-tRNA(Ala) + AMP + diphosphate. Catalyzes the attachment of alanine to tRNA(Ala) in a two-step reaction: alanine is first activated by ATP to form Ala-AMP and then transferred to the acceptor end of tRNA(Ala). Also edits incorrectly charged Ser-tRNA(Ala) and Gly-tRNA(Ala) via its editing domain. The chain is Alanine--tRNA ligase from Parasynechococcus marenigrum (strain WH8102).